Here is a 356-residue protein sequence, read N- to C-terminus: tRNA-specific 2-thiouridylase MnmA 1 (356 aa).

Residues 8-15 (GMSGGVDS) and Met34 each bind ATP. The Nucleophile role is filled by Cys103. Cys103 and Cys199 are disulfide-bonded. Gly127 is an ATP binding site. The tract at residues 149-151 (KDQ) is interaction with tRNA. Residue Cys199 is the Cysteine persulfide intermediate of the active site. Residues 305 to 306 (RY) form an interaction with tRNA region.

Belongs to the MnmA/TRMU family.

The protein resides in the cytoplasm. The enzyme catalyses S-sulfanyl-L-cysteinyl-[protein] + uridine(34) in tRNA + AH2 + ATP = 2-thiouridine(34) in tRNA + L-cysteinyl-[protein] + A + AMP + diphosphate + H(+). Its function is as follows. Catalyzes the 2-thiolation of uridine at the wobble position (U34) of tRNA, leading to the formation of s(2)U34. In Clostridium botulinum (strain Langeland / NCTC 10281 / Type F), this protein is tRNA-specific 2-thiouridylase MnmA 1.